Here is a 159-residue protein sequence, read N- to C-terminus: Phosphopantetheine adenylyltransferase (159 aa).

T10 contributes to the substrate binding site. Residues 10 to 11 (TF) and H18 contribute to the ATP site. Substrate is bound by residues K42, L74, and R88. ATP contacts are provided by residues 89 to 91 (GLR), E99, and 124 to 130 (YAFISSS).

Belongs to the bacterial CoaD family. In terms of assembly, homohexamer. It depends on Mg(2+) as a cofactor.

The protein localises to the cytoplasm. It catalyses the reaction (R)-4'-phosphopantetheine + ATP + H(+) = 3'-dephospho-CoA + diphosphate. The protein operates within cofactor biosynthesis; coenzyme A biosynthesis; CoA from (R)-pantothenate: step 4/5. Its function is as follows. Reversibly transfers an adenylyl group from ATP to 4'-phosphopantetheine, yielding dephospho-CoA (dPCoA) and pyrophosphate. This is Phosphopantetheine adenylyltransferase from Hydrogenovibrio crunogenus (strain DSM 25203 / XCL-2) (Thiomicrospira crunogena).